A 131-amino-acid chain; its full sequence is Large ribosomal subunit protein bL17 (131 aa).

The protein belongs to the bacterial ribosomal protein bL17 family. Part of the 50S ribosomal subunit. Contacts protein L32.

The sequence is that of Large ribosomal subunit protein bL17 from Bordetella parapertussis (strain 12822 / ATCC BAA-587 / NCTC 13253).